Reading from the N-terminus, the 337-residue chain is Fructose-1,6-bisphosphatase class 1 (337 aa).

4 residues coordinate Mg(2+): E89, D112, L114, and D115. Substrate is bound by residues 115–118 (DGSS), N208, Y241, and K271. Position 277 (E277) interacts with Mg(2+).

This sequence belongs to the FBPase class 1 family. As to quaternary structure, homotetramer. Mg(2+) serves as cofactor.

The protein resides in the cytoplasm. The catalysed reaction is beta-D-fructose 1,6-bisphosphate + H2O = beta-D-fructose 6-phosphate + phosphate. Its pathway is carbohydrate biosynthesis; gluconeogenesis. In Yersinia enterocolitica serotype O:8 / biotype 1B (strain NCTC 13174 / 8081), this protein is Fructose-1,6-bisphosphatase class 1.